The chain runs to 406 residues: Cysteine desulfurase (406 aa).

At Lys-226 the chain carries N6-(pyridoxal phosphate)lysine. The active-site Cysteine persulfide intermediate is the Cys-364.

This sequence belongs to the class-V pyridoxal-phosphate-dependent aminotransferase family. Csd subfamily. As to quaternary structure, homodimer. Interacts with SufE and the SufBCD complex composed of SufB, SufC and SufD. The interaction with SufE is required to mediate the direct transfer of the sulfur atom from the S-sulfanylcysteine. Pyridoxal 5'-phosphate serves as cofactor.

It is found in the cytoplasm. It catalyses the reaction (sulfur carrier)-H + L-cysteine = (sulfur carrier)-SH + L-alanine. The catalysed reaction is L-selenocysteine + AH2 = hydrogenselenide + L-alanine + A + H(+). Its pathway is cofactor biosynthesis; iron-sulfur cluster biosynthesis. Its function is as follows. Cysteine desulfurases mobilize the sulfur from L-cysteine to yield L-alanine, an essential step in sulfur metabolism for biosynthesis of a variety of sulfur-containing biomolecules. Component of the suf operon, which is activated and required under specific conditions such as oxidative stress and iron limitation. Acts as a potent selenocysteine lyase in vitro, that mobilizes selenium from L-selenocysteine. Selenocysteine lyase activity is however unsure in vivo. This is Cysteine desulfurase from Enterobacter sp. (strain 638).